Consider the following 101-residue polypeptide: Kunitz-type anticoagulant protein HA11 (101 aa).

The signal sequence occupies residues 1-23 (MKTYLILATLALIFSAMLTNICA). A BPTI/Kunitz inhibitor domain is found at 32 to 88 (CTEAPGDGKCPGEVRPAISTANWTFSKSFGGCVAHRWGSCGNHSNVFPKCLSCMTTC). Cystine bridges form between C32/C88, C41/C71, and C63/C84. N-linked (GlcNAc...) asparagine glycosylation is found at N53, N73, and N92.

Expressed in female salivary gland and ovary.

It localises to the secreted. Anticoagulant protein that modulates blood feeding of ticks on vertebrate species. Delays normal clotting of host plasma. The polypeptide is Kunitz-type anticoagulant protein HA11 (Hyalomma asiaticum (Tick)).